The sequence spans 222 residues: N-(5'-phosphoribosyl)anthranilate isomerase (222 aa).

This sequence belongs to the TrpF family.

It carries out the reaction N-(5-phospho-beta-D-ribosyl)anthranilate = 1-(2-carboxyphenylamino)-1-deoxy-D-ribulose 5-phosphate. Its pathway is amino-acid biosynthesis; L-tryptophan biosynthesis; L-tryptophan from chorismate: step 3/5. This Rhizobium rhizogenes (strain K84 / ATCC BAA-868) (Agrobacterium radiobacter) protein is N-(5'-phosphoribosyl)anthranilate isomerase.